A 447-amino-acid chain; its full sequence is MIKIRRGLDLPITGSPRQSIEDGPAIRSVALIGFDYHGMKPTMNVQVGDKVKLGQVLFTDKKTVGVKYTSPAAGTVSAINRGERRVLQSVVIDIEGDEAESFKTFSEAEIASADRQALVDNLVDSGLWTALRTRPYSKVPQLDSVPNSIFVTAMDTNPLAADPQLVIGEKSAAFALGLAVLAKLTEGKVFVCHADGASVPTSAAANVEAKAFSGVHPAGNAGTHIHFLDPVSANKTVWTIGYQDVIAYGELFTSGKLPVDRVVSLAGPQVTDPRVVRTRLGASLQELTAGQLKDGENRIISGSVFSGRKTSSPTAYLGRFHNQVSVLLEGRDRPFLHYLVAGANRFSVMPIYLSKLFGGKKFDFTTSTLGSERAMVPVGAYEKVMPLDILPTQLLRSIIVGDTEAAQQLGCLELDEEDLALCSFVCPGKYEYGPILRDNLTRIEKEG.

Belongs to the NqrA family. In terms of assembly, composed of six subunits; NqrA, NqrB, NqrC, NqrD, NqrE and NqrF.

The enzyme catalyses a ubiquinone + n Na(+)(in) + NADH + H(+) = a ubiquinol + n Na(+)(out) + NAD(+). NQR complex catalyzes the reduction of ubiquinone-1 to ubiquinol by two successive reactions, coupled with the transport of Na(+) ions from the cytoplasm to the periplasm. NqrA to NqrE are probably involved in the second step, the conversion of ubisemiquinone to ubiquinol. The sequence is that of Na(+)-translocating NADH-quinone reductase subunit A from Saccharophagus degradans (strain 2-40 / ATCC 43961 / DSM 17024).